Reading from the N-terminus, the 608-residue chain is Glutamine--fructose-6-phosphate aminotransferase [isomerizing] (608 aa).

C2 serves as the catalytic Nucleophile; for GATase activity. The 216-residue stretch at 2–217 (CGIVGIVGHK…DGDWAVVGKT (216 aa)) folds into the Glutamine amidotransferase type-2 domain. SIS domains follow at residues 283–422 (TDID…ARGT) and 456–598 (LSRE…VDQP). The active-site For Fru-6P isomerization activity is K603.

It is found in the cytoplasm. The enzyme catalyses D-fructose 6-phosphate + L-glutamine = D-glucosamine 6-phosphate + L-glutamate. Functionally, involved in the production of the root hair deformation (HAD) factor specifically on medicago. This is Glutamine--fructose-6-phosphate aminotransferase [isomerizing] (nodM) from Rhizobium leguminosarum bv. viciae.